The sequence spans 217 residues: Peroxiredoxin (217 aa).

Residues 2-159 (VVIGEKFPEV…VVRLVKALQT (158 aa)) enclose the Thioredoxin domain. The active-site Cysteine sulfenic acid (-SOH) intermediate is cysteine 46. Arginine 122 provides a ligand contact to substrate.

The protein belongs to the peroxiredoxin family. Prx6 subfamily. Homodecamer. Pentamer of dimers that assemble into a ring structure.

The protein resides in the cytoplasm. The catalysed reaction is a hydroperoxide + [thioredoxin]-dithiol = an alcohol + [thioredoxin]-disulfide + H2O. Thiol-specific peroxidase that catalyzes the reduction of hydrogen peroxide and organic hydroperoxides to water and alcohols, respectively. Plays a role in cell protection against oxidative stress by detoxifying peroxides. The chain is Peroxiredoxin from Methanococcus maripaludis (strain C5 / ATCC BAA-1333).